The sequence spans 393 residues: Thermostable carboxypeptidase 1 (393 aa).

Positions 104, 109, and 245 each coordinate Zn(2+). The active-site Proton donor is Tyr-302. Residue Glu-373 is the Nucleophile of the active site.

The protein belongs to the peptidase M20 family. As to quaternary structure, homotetramer. Requires Zn(2+) as cofactor.

In terms of biological role, can release basic, acidic, aromatic, and, to a lesser extent, aliphatic amino acids. In Saccharolobus solfataricus (strain ATCC 35092 / DSM 1617 / JCM 11322 / P2) (Sulfolobus solfataricus), this protein is Thermostable carboxypeptidase 1 (cpsA1).